The chain runs to 292 residues: RWD domain-containing protein 2A (292 aa).

Residues 14–134 enclose the RWD domain; that stretch reads LEMEMLFSMF…QWLQDNSASY (121 aa).

In Macaca fascicularis (Crab-eating macaque), this protein is RWD domain-containing protein 2A (RWDD2A).